The following is a 350-amino-acid chain: WUSCHEL-related homeobox 1 (350 aa).

Positions 72–136 form a DNA-binding region, homeobox; WUS-type; the sequence is MVSSRWNPTP…NHKARERQKR (65 aa). The tract at residues 283-308 is disordered; the sequence is TNTETCHRNGDDNKDQEQHEDCSNGE.

It belongs to the WUS homeobox family.

Its subcellular location is the nucleus. Transcription factor which may be involved in developmental processes. In Arabidopsis thaliana (Mouse-ear cress), this protein is WUSCHEL-related homeobox 1 (WOX1).